The following is a 259-amino-acid chain: MATIKEIKELLVTVKELESPIFLDLEKDNRSGVQKEISKRKRAIQAELDENLRLESMLSYEKELYKQGLTLIAGIDEVGRGPLAGPVVAAAVILPKNCKIKGLNDSKKIPKKKHLEIFQAVQDQALSIGIGIIDNQVIDQVNIYEATKLAMQEAISQLSPQPEHLLIDAMKLDLPISQTSIIKGDANSLSIAAASIVAKVTRDELMKEYDQQFPGYDFATNAGYGTAKHLEGLTKLGVTPIHRTSFEPVKSLVLGKKES.

Residues 70 to 258 (TLIAGIDEVG…VKSLVLGKKE (189 aa)) enclose the RNase H type-2 domain. A divalent metal cation contacts are provided by aspartate 76, glutamate 77, and aspartate 168.

Belongs to the RNase HII family. Requires Mn(2+) as cofactor. The cofactor is Mg(2+).

The protein resides in the cytoplasm. It carries out the reaction Endonucleolytic cleavage to 5'-phosphomonoester.. Its function is as follows. Endonuclease that specifically degrades the RNA of RNA-DNA hybrids. The polypeptide is Ribonuclease HII (Streptococcus pneumoniae (strain Taiwan19F-14)).